We begin with the raw amino-acid sequence, 432 residues long: 3-oxo-tetronate kinase (432 aa).

ATP-binding positions include H155, S272, A324, G344, E348, 370-373 (GGET), and G414.

Belongs to the four-carbon acid sugar kinase family.

The enzyme catalyses 3-dehydro-L-erythronate + ATP = 3-dehydro-4-O-phospho-L-erythronate + ADP + H(+). It catalyses the reaction 3-dehydro-D-erythronate + ATP = 3-dehydro-4-O-phospho-D-erythronate + ADP + H(+). Catalyzes the ATP-dependent phosphorylation of 3-oxo-tetronate to 3-oxo-tetronate 4-phosphate. The chain is 3-oxo-tetronate kinase from Cupriavidus necator (strain ATCC 17699 / DSM 428 / KCTC 22496 / NCIMB 10442 / H16 / Stanier 337) (Ralstonia eutropha).